We begin with the raw amino-acid sequence, 398 residues long: Ureide permease 2 (398 aa).

Residues 1–10 (MYLVESKGGA) are Extracellular-facing. The chain crosses the membrane as a helical span at residues 11 to 31 (IACMLLALLSLGTWPAVLTLL). At 32 to 44 (ERRGRLPQHTYLD) the chain is on the cytoplasmic side. The helical transmembrane segment at 45–65 (YSITNLLAAIIIAFTFGQIGS) threads the bilayer. Over 66–81 (TKPDSPNFITQLAQDN) the chain is Extracellular. Residues 82–102 (WPSVMFAMAGGIVLSLGNLST) traverse the membrane as a helical segment. At 103-104 (QY) the chain is on the cytoplasmic side. A helical transmembrane segment spans residues 105-125 (AWALVGLSVTEVITSSITVVI). Residues 126–139 (GSTLNYFLDDKINK) are Extracellular-facing. A helical membrane pass occupies residues 140–160 (AEILFPGVACFLIAVCLGSAV). Residues 161–229 (HRSNADDNKA…RAIKVFGKRK (69 aa)) are Cytoplasmic-facing. The interval 176–200 (ETAKQEASGPSTEIGTNSSKDLETN) is disordered. Polar residues predominate over residues 183–200 (SGPSTEIGTNSSKDLETN). An ATP-binding site is contributed by 221–228 (AIKVFGKR). A helical transmembrane segment spans residues 230 to 250 (IIGLAITFFAGLCFSLFSPAF). The Extracellular segment spans residues 251–272 (NLATNDQWNRLKQGVPKLVVYT). The chain crosses the membrane as a helical span at residues 273 to 293 (AFFYFSVSCFIIALILNVVFL). The Cytoplasmic portion of the chain corresponds to 294–315 (YYPVLGLPKSSFKAYLNDWNGR). A helical transmembrane segment spans residues 316–336 (YWAFLAGFLCGFGNGLQFMGG). Residues 337–341 (QAAGY) lie on the Extracellular side of the membrane. Residues 342 to 362 (AAADSVQALPLVSTFWGVVLF) traverse the membrane as a helical segment. Residues 363–371 (GEYRRSSRK) are Cytoplasmic-facing. The helical transmembrane segment at 372-392 (TYLLLFCMLFMFISAVAVLMA) threads the bilayer. The Extracellular segment spans residues 393-398 (SSGHRK).

It belongs to the plant ureide permease (TC 2.A.7.19) family. As to expression, expressed in root xylem, cotyledons and leaves. Expressed in leaf blades, petioles, trichomes, stems, flower stigma, the upper part of pedicels, sepals, and the top and bottom parts of carpels in siliques.

Its subcellular location is the membrane. Proton-coupled transporter that transports a wide spectrum of oxo derivatives of heterocyclic nitrogen compounds, including allantoin, uric acid and xanthine, but not adenine. Mediates high affinity transport of uracil and 5-fluorouracil (a toxic uracil analog). Mediates transport of free pyrimidines and may function during early seedling development in salvage pathways, by the utilization of pyrimidines from seed storage tissue. The chain is Ureide permease 2 from Arabidopsis thaliana (Mouse-ear cress).